Reading from the N-terminus, the 639-residue chain is MKQENLTQECCSTSPKISKGLMVLQSIASRGCDTQDSEKKPQSTQQSLKKSSQAAAGYFYDKEDQIRKLSKHNGFLSEMEDMRKAFLMRPGCPQFSTRTTSMSHVGSAIMVDLPRTCSGVWKLTEDHPLGRLGSASSVDGRVFPFSKSACELNYPRKRSEPSDPSPTGSPTVVKKSQRTRTPWYISVIHEKDHSLLLMGEELQRFSEMESQMQKKDQEILTLQKEKEALKKQLKNLLRGKGTETSSASIKMDRSFETPLKLGRMSVLKTIYKEEDELQHWMQMQEEYSMAESSKELHVEPGSAIEEKSSEGPPEEAAAAKLSRPSQSKTETLLEVGPEEEEEEEEEEVEGDEAKGTEEGEILVNEEEASWELREDEECHPKRSYSMTESFEEELMAQLEEYERMLMDFQRELEFTRSRYSLATGTITSLQRQTDFQESQLRKVTTENELLEKELRERKQQIQDMTDKFSNLREEKKHQEIMGLIEKENLVLRQQVADLKMDLISSERTIKELNTQTKELEDQVNTDKDHLRRWKDLHDDLQTRNEIIQQTEQQTRVVLEATQARYEKLRNKIIQAVFSVSGNKNLSMELSDSYILESLQRIISERSDFYSQLKQKGVKVPPLQQSDVSLPSKIKKMASK.

Positions 154–176 are disordered; it reads YPRKRSEPSDPSPTGSPTVVKKS. Residues 203–242 adopt a coiled-coil conformation; that stretch reads QRFSEMESQMQKKDQEILTLQKEKEALKKQLKNLLRGKGT. The segment at 291 to 385 is disordered; it reads ESSKELHVEP…EECHPKRSYS (95 aa). The segment covering 292 to 309 has biased composition (basic and acidic residues); it reads SSKELHVEPGSAIEEKSS. Residues 310–320 show a composition bias toward low complexity; that stretch reads EGPPEEAAAAK. Composition is skewed to acidic residues over residues 336-350 and 358-369; these read GPEE…EVEG and EGEILVNEEEAS. Basic and acidic residues predominate over residues 370 to 380; that stretch reads WELREDEECHP.

This is Coiled-coil domain-containing protein 27 (Ccdc27) from Mus musculus (Mouse).